A 1363-amino-acid chain; its full sequence is Clustered mitochondria protein homolog (1363 aa).

TPR repeat units follow at residues 29-63 and 120-154; these read LPSFFNVGDDYLTIPSSYEENIADLKQALNIIVLC and KEKSYNLASIYEQISRFREVIGLHYIDRLSNDIGS. The disordered stretch occupies residues 172–191; sequence KEAKKEESTEKEQQEKEELS. One copy of the TPR 3 repeat lies at 283–316; that stretch reads STINFNPTIKINEKGKFNKSYLLYDLVCQLSPLF. Residues 361–631 enclose the Clu domain; it reads DLSRSQLSSL…RTTPRDIEFI (271 aa). A disordered region spans residues 521–544; sequence PVITSPTTDAEGKNEAEEPESEPV. One copy of the TPR 4 repeat lies at 548 to 581; it reads VYGLSSDGSRILEDKSFEEPLKQIGDFFHLKPHK. The segment covering 799–832 has biased composition (basic and acidic residues); the sequence is AKAEKKREEEKEKEEKEATESEDKKEKKEDKEDA. Residues 799-844 are disordered; that stretch reads AKAEKKREEEKEKEEKEATESEDKKEKKEDKEDAEKEEAEAEEEVP. A compositionally biased stretch (acidic residues) spans 833–842; that stretch reads EKEEAEAEEE. TPR repeat units lie at residues 1057–1090, 1141–1174, 1183–1216, and 1225–1258; these read VEEIYSNARSHLVQGNKEMGMALFNELLAINESI, ITAYMNSAYYESSNEQYLNSLKLYKEAMNTWSLV, INTLTNLSESLLKIKAYDSALELLQEALEITKKL, and GFIYYRIANIVVTLNKFKESKELFDKAYDIFMKL. The segment at 1291–1363 is disordered; the sequence is QQETQKKSKT…SGSKKSNKKK (73 aa). Polar residues predominate over residues 1330 to 1342; it reads PPQSNPEIANQSI.

Belongs to the CLU family. In terms of assembly, may associate with the eukaryotic translation initiation factor 3 (eIF-3) complex.

It localises to the cytoplasm. In terms of biological role, mRNA-binding protein involved in proper cytoplasmic distribution of mitochondria. This chain is Clustered mitochondria protein homolog, found in Candida albicans (strain SC5314 / ATCC MYA-2876) (Yeast).